A 102-amino-acid chain; its full sequence is Small ribosomal subunit protein uS10 (102 aa).

Belongs to the universal ribosomal protein uS10 family. Part of the 30S ribosomal subunit.

Functionally, involved in the binding of tRNA to the ribosomes. In Myxococcus xanthus (strain DK1622), this protein is Small ribosomal subunit protein uS10.